A 101-amino-acid polypeptide reads, in one-letter code: NADH-quinone oxidoreductase subunit K (101 aa).

The next 3 membrane-spanning stretches (helical) occupy residues 4–24 (LAHYLVLGAILFAIAIVGIFL), 30–50 (IIILMSIELMLLAVNTNFVAF), and 61–81 (IFVFFVLTVAAAEAAIGLAIL).

Belongs to the complex I subunit 4L family. In terms of assembly, NDH-1 is composed of 14 different subunits. Subunits NuoA, H, J, K, L, M, N constitute the membrane sector of the complex.

The protein localises to the cell inner membrane. It catalyses the reaction a quinone + NADH + 5 H(+)(in) = a quinol + NAD(+) + 4 H(+)(out). In terms of biological role, NDH-1 shuttles electrons from NADH, via FMN and iron-sulfur (Fe-S) centers, to quinones in the respiratory chain. The immediate electron acceptor for the enzyme in this species is believed to be ubiquinone. Couples the redox reaction to proton translocation (for every two electrons transferred, four hydrogen ions are translocated across the cytoplasmic membrane), and thus conserves the redox energy in a proton gradient. This chain is NADH-quinone oxidoreductase subunit K, found in Burkholderia cenocepacia (strain HI2424).